The primary structure comprises 357 residues: N-acetyl-gamma-glutamyl-phosphate reductase (357 aa).

The active site involves Cys160.

This sequence belongs to the NAGSA dehydrogenase family. Type 1 subfamily.

The protein localises to the cytoplasm. The enzyme catalyses N-acetyl-L-glutamate 5-semialdehyde + phosphate + NADP(+) = N-acetyl-L-glutamyl 5-phosphate + NADPH + H(+). It functions in the pathway amino-acid biosynthesis; L-arginine biosynthesis; N(2)-acetyl-L-ornithine from L-glutamate: step 3/4. Its function is as follows. Catalyzes the NADPH-dependent reduction of N-acetyl-5-glutamyl phosphate to yield N-acetyl-L-glutamate 5-semialdehyde. This chain is N-acetyl-gamma-glutamyl-phosphate reductase, found in Prochlorococcus marinus (strain MIT 9313).